The following is a 134-amino-acid chain: Cytochrome b5 (134 aa).

The 77-residue stretch at 6–82 (TKTFTRAEVA…MKKYKIGELV (77 aa)) folds into the Cytochrome b5 heme-binding domain. 2 residues coordinate heme: H41 and H65. The segment at 86-105 (RTSVAQKSEPTWSTEQQTEE) is disordered. The segment covering 87-105 (TSVAQKSEPTWSTEQQTEE) has biased composition (polar residues). The chain crosses the membrane as a helical span at residues 111 to 131 (WLVPLVLCLVATLFYKFFFGG).

Belongs to the cytochrome b5 family.

Its subcellular location is the endoplasmic reticulum membrane. It localises to the microsome membrane. Functionally, cytochrome b5 is a membrane-bound hemoprotein which functions as an electron carrier for several membrane-bound oxygenases. This chain is Cytochrome b5 (Cyt-b5), found in Drosophila melanogaster (Fruit fly).